Reading from the N-terminus, the 1695-residue chain is Sialoadhesin (1695 aa).

An N-terminal signal peptide occupies residues 1-19 (MCVLFSLLLLASVFSLGQT). The Ig-like V-type domain maps to 20 to 136 (TWGVSSPKNV…DVKGTTVTVT (117 aa)). The Extracellular segment spans residues 20-1639 (TWGVSSPKNV…ALHQLQLFQR (1620 aa)). 4 disulfides stabilise this stretch: Cys-36/Cys-166, Cys-41/Cys-98, Cys-160/Cys-218, and Cys-263/Cys-306. Residues Tyr-63, Arg-116, and 122 to 126 (SNRWL) contribute to the N-acetylneuraminate site. Ig-like C2-type domains lie at 153-235 (GMER…YLQV), 239-321 (PKGV…SPLS), 326-406 (MAEV…SPLS), 416-508 (PDLT…LDFY), 509-594 (ANVA…TVLT), 602-701 (PTFT…ASFN), 704-781 (ATVL…AQLS), 795-890 (PKLS…FQVR), 894-973 (VQVS…APVS), 980-1079 (PRHV…ADFD), 1081-1161 (QAVR…RPVT), 1172-1264 (RLTY…MNPS), 1245-1337 (KANT…ASLQ), 1342-1439 (PRDA…RLLT), 1442-1520 (DIRV…ATTS), and 1534-1627 (PTLI…AYFG). Asn-159 carries N-linked (GlcNAc...) asparagine glycosylation. N-linked (GlcNAc...) asparagine glycans are attached at residues Asn-266, Asn-299, and Asn-340. 2 disulfide bridges follow: Cys-347–Cys-391 and Cys-434–Cys-492. The N-linked (GlcNAc...) asparagine glycan is linked to Asn-500. Cys-532 and Cys-576 are joined by a disulfide. N-linked (GlcNAc...) asparagine glycosylation occurs at Asn-583. Cys-625 and Cys-685 are oxidised to a cystine. Residues Asn-693, Asn-722, and Asn-737 are each glycosylated (N-linked (GlcNAc...) asparagine). 2 cysteine pairs are disulfide-bonded: Cys-725-Cys-770 and Cys-813-Cys-872. A Cell attachment site motif is present at residues 827-829 (RGD). N-linked (GlcNAc...) asparagine glycosylation is present at Asn-882. Disulfide bonds link Cys-912/Cys-956 and Cys-1001/Cys-1063. N-linked (GlcNAc...) asparagine glycans are attached at residues Asn-1090 and Asn-1100. 2 cysteine pairs are disulfide-bonded: Cys-1103–Cys-1145 and Cys-1189–Cys-1237. Asn-1247 carries N-linked (GlcNAc...) asparagine glycosylation. Intrachain disulfides connect Cys-1277–Cys-1320 and Cys-1363–Cys-1422. N-linked (GlcNAc...) asparagine glycans are attached at residues Asn-1460 and Asn-1474. Cystine bridges form between Cys-1463–Cys-1509 and Cys-1552–Cys-1611. The chain crosses the membrane as a helical span at residues 1640–1660 (LLWVLGFLAGFLCLLLGLVAY). Over 1661 to 1695 (HTWRKKSSTKLNEDENSAEMATKKNTIQEEVVAAL) the chain is Cytoplasmic.

It belongs to the immunoglobulin superfamily. SIGLEC (sialic acid binding Ig-like lectin) family. In terms of assembly, interacts with CLEC10A. In terms of tissue distribution, detected in lymph node in the subcapsular sinus, interfollicular regions, and T and B-cell boundary (at protein level). Expressed by macrophages in various tissues. Highest expression in spleen and lymph node with lower amounts in lung, liver, bone marrow, heart and skin. No expression in thymus, kidney, brain or small intestine.

Its subcellular location is the cell membrane. The protein localises to the secreted. Macrophage-restricted adhesion molecule that mediates sialic-acid dependent binding to lymphocytes, including granulocytes, monocytes, natural killer cells, B-cells and CD8 T-cells. Plays a crucial role in limiting bacterial dissemination by engaging sialylated bacteria to promote effective phagocytosis and antigen presentation for the adaptive immune response. Mediates the uptake of various enveloped viruses via sialic acid recognition and subsequently induces the formation of intracellular compartments filled with virions (VCCs). In turn, enhances macrophage-to-T-cell transmission of several viruses including murine leukemia virus. Acts as an endocytic receptor mediating clathrin dependent endocytosis. Preferentially binds to alpha-2,3-linked sialic acid. Binds to SPN/CD43 on T-cells. May play a role in hemopoiesis. Plays a role in the inhibition of antiviral innate immune by promoting TBK1 degradation via TYROBP and TRIM27-mediated ubiquitination. The sequence is that of Sialoadhesin (Siglec1) from Mus musculus (Mouse).